The chain runs to 424 residues: F-box protein At2g38590 (424 aa).

Residues 2–47 enclose the F-box domain; it reads TTMISNLPRVLIEEIFFRVPLKSLRAVRLTCKSWNTLSKSRSFRKL.

In Arabidopsis thaliana (Mouse-ear cress), this protein is F-box protein At2g38590.